The primary structure comprises 500 residues: Probable malate:quinone oxidoreductase (500 aa).

Belongs to the MQO family. The cofactor is FAD.

It carries out the reaction (S)-malate + a quinone = a quinol + oxaloacetate. It participates in carbohydrate metabolism; tricarboxylic acid cycle; oxaloacetate from (S)-malate (quinone route): step 1/1. The sequence is that of Probable malate:quinone oxidoreductase from Corynebacterium aurimucosum (strain ATCC 700975 / DSM 44827 / CIP 107346 / CN-1) (Corynebacterium nigricans).